The primary structure comprises 378 residues: WUSCHEL-related homeobox 9 (378 aa).

Disordered regions lie at residues Met-1–Pro-60 and Lys-123–Met-173. The segment covering Ser-32–Ser-42 has biased composition (low complexity). Basic and acidic residues predominate over residues Glu-45 to Pro-54. The homeobox; WUS-type DNA-binding region spans Glu-51 to Leu-115. Low complexity-rich tracts occupy residues Pro-137–Ser-152 and Lys-161–Ser-171.

The protein belongs to the WUS homeobox family. As to expression, expressed in the basal cell and later at the boundary between suspensor and proembryo. Expressed at low levels in proliferating tissues post embryonically. Detected in vegetative shoot apical meristem, leaf primordia, floral meristems, emerging floral organs, epidermal layer of the placenta and in the upper portion of the root meristematic zone.

It localises to the nucleus. Its subcellular location is the cytoplasm. Homeodomain transcription factor required for meristem growth and early development. Promotes cell proliferation and prevents premature differentiation in meristematic tissues during postembryonic development. Essential for maintaining tissue growth during embryogenesis. May act by repressing TSS to promote meristematic proliferation. Involved in the transcriptional activation of a subset of cytokinin response factors. May act as a negative regulator of cytokinin signaling in the dark. The protein is WUSCHEL-related homeobox 9 of Arabidopsis thaliana (Mouse-ear cress).